The sequence spans 172 residues: Epithelial membrane protein 2 (172 aa).

Helical transmembrane passes span 1–21, 72–92, 100–120, and 148–168; these read MLVILAFIIVFHIVSTALLFI, TMILSTILSCISFLIFLLQLF, FVLTAIIQLMSCLCVMIGASV, and FILAWVAFAFTFISGLMYMIL.

The protein belongs to the PMP-22/EMP/MP20 family. Interacts with PTK2; regulates PTK2 activation and localization. Interacts with ITGB3; regulates the levels of the heterodimer ITGA5-ITGB3 integrin surface expression. Interacts with P2RX7 (via C-terminus). Interacts with ITGB1; the interaction may be direct or indirect and ITGB1 has a heterodimer form. Expressed in glomeruli.

Its subcellular location is the golgi apparatus membrane. It is found in the cell membrane. The protein resides in the apical cell membrane. It localises to the membrane raft. The protein localises to the cytoplasm. Its subcellular location is the nucleus. It is found in the perinuclear region. Functions as a key regulator of cell membrane composition by regulating protein surface expression. Also, plays a role in regulation of processes including cell migration, cell proliferation, cell contraction and cell adhesion. Regulates transepithelial migration of neutrophils into the alveolar lumen, potentially via mediation of cell surface expression of adhesion markers and lipid raft formation. Negatively regulates caveolae formation by reducing CAV1 expression and CAV1 amount by increasing lysosomal degradation. Facilitates surface trafficking and the formation of lipid rafts bearing GPI-anchor proteins. Regulates surface expression of MHC1 and ICAM1 proteins increasing susceptibility to T-cell mediated cytotoxicity. Regulates the plasma membrane expression of the integrin heterodimers ITGA6-ITGB1, ITGA5-ITGB3 and ITGA5-ITGB1 resulting in modulation of cell-matrix adhesion. Also regulates many processes through PTK2. Regulates blood vessel endothelial cell migration and angiogenesis by regulating VEGF protein expression through PTK2 activation. Regulates cell migration and cell contraction through PTK2 and SRC activation. Regulates focal adhesion density, F-actin conformation and cell adhesion capacity through interaction with PTK2. Positively regulates cell proliferation. Plays a role during cell death and cell blebbing. Promotes angiogenesis and vasculogenesis through induction of VEGFA via a HIF1A-dependent pathway. Also plays a role in embryo implantation by regulating surface trafficking of integrin heterodimer ITGA5-ITGB3. Plays a role in placental angiogenesis and uterine natural killer cell regulation at the maternal-fetal placental interface, however not required in the maternal tissues for a viable pregnancy. Involved in the early stages of embryogenic development and cardiogenesis, potentially via regulation of epithelial-mesenchymal transition timing. May play a role in glomerular filtration. The polypeptide is Epithelial membrane protein 2 (Emp2) (Rattus norvegicus (Rat)).